A 1248-amino-acid polypeptide reads, in one-letter code: ABC transporter B family member 7 (1248 aa).

Helical transmembrane passes span 32–52 (IVLM…QPFM), 82–102 (FLYL…CWMV), 158–175 (FTQL…AFIV), 179–201 (LTLA…TYIM), 261–281 (GLGI…AIWY), and 299–321 (VITS…NSFA). The 288-residue stretch at 35–322 (MVIGTLSAMA…TLPSLNSFAA (288 aa)) folds into the ABC transmembrane type-1 1 domain. Residues 357-593 (IELRDVYFRY…PEGTYSQLVR (237 aa)) enclose the ABC transporter 1 domain. Residue 392–399 (GQSGSGKS) coordinates ATP. Residues asparagine 473 and asparagine 652 are each glycosylated (N-linked (GlcNAc...) asparagine). A helical transmembrane segment spans residues 682-702 (VLLLGSLAAVIHGIVFPVQGL). One can recognise an ABC transmembrane type-1 2 domain in the interval 683–970 (LLLGSLAAVI…TSTMAPDINK (288 aa)). Residue asparagine 720 is glycosylated (N-linked (GlcNAc...) asparagine). The helical transmembrane segment at 722–742 (SLFWALIFVALGLTDLIVIPL) threads the bilayer. Asparagine 779 carries an N-linked (GlcNAc...) asparagine glycan. 4 helical membrane passes run 813–833 (IIGA…MALL), 834–854 (VAPV…GFGA), 914–934 (GSYL…SWLI), and 939–959 (ATFG…VGVT). The ABC transporter 2 domain occupies 1005–1242 (IELQHVSFRY…SGGAYASLVA (238 aa)). Residue 1040 to 1047 (GESGSGKS) participates in ATP binding. N-linked (GlcNAc...) asparagine glycosylation is found at asparagine 1094, asparagine 1193, and asparagine 1244.

The protein belongs to the ABC transporter superfamily. ABCB family. Multidrug resistance exporter (TC 3.A.1.201) subfamily.

The protein resides in the membrane. This is ABC transporter B family member 7 (ABCB7) from Arabidopsis thaliana (Mouse-ear cress).